The primary structure comprises 69 residues: Sec-independent protein translocase protein TatA (69 aa).

The helical transmembrane segment at 1 to 21 threads the bilayer; sequence MFGLGGQELILILLIILLLFG.

The protein belongs to the TatA/E family. Forms a complex with TatC.

Its subcellular location is the cell inner membrane. Its function is as follows. Part of the twin-arginine translocation (Tat) system that transports large folded proteins containing a characteristic twin-arginine motif in their signal peptide across membranes. TatA could form the protein-conducting channel of the Tat system. This chain is Sec-independent protein translocase protein TatA, found in Chlorobium phaeovibrioides (strain DSM 265 / 1930) (Prosthecochloris vibrioformis (strain DSM 265)).